A 197-amino-acid chain; its full sequence is NADH-quinone oxidoreductase subunit C (197 aa).

The protein belongs to the complex I 30 kDa subunit family. In terms of assembly, NDH-1 is composed of 14 different subunits. Subunits NuoB, C, D, E, F, and G constitute the peripheral sector of the complex.

The protein localises to the cell inner membrane. The catalysed reaction is a quinone + NADH + 5 H(+)(in) = a quinol + NAD(+) + 4 H(+)(out). In terms of biological role, NDH-1 shuttles electrons from NADH, via FMN and iron-sulfur (Fe-S) centers, to quinones in the respiratory chain. The immediate electron acceptor for the enzyme in this species is believed to be ubiquinone. Couples the redox reaction to proton translocation (for every two electrons transferred, four hydrogen ions are translocated across the cytoplasmic membrane), and thus conserves the redox energy in a proton gradient. This is NADH-quinone oxidoreductase subunit C from Caulobacter vibrioides (strain ATCC 19089 / CIP 103742 / CB 15) (Caulobacter crescentus).